Consider the following 423-residue polypeptide: Histidine--tRNA ligase (423 aa).

Belongs to the class-II aminoacyl-tRNA synthetase family. Homodimer.

The protein resides in the cytoplasm. The enzyme catalyses tRNA(His) + L-histidine + ATP = L-histidyl-tRNA(His) + AMP + diphosphate + H(+). This Bacillus cytotoxicus (strain DSM 22905 / CIP 110041 / 391-98 / NVH 391-98) protein is Histidine--tRNA ligase.